The primary structure comprises 225 residues: Small ribosomal subunit protein mS26 (225 aa).

It belongs to the mitochondrion-specific ribosomal protein mS26 family. As to quaternary structure, component of the mitochondrial ribosome small subunit (28S) which comprises a 12S rRNA and about 30 distinct proteins.

Its subcellular location is the mitochondrion. The polypeptide is Small ribosomal subunit protein mS26 (mRpS26) (Drosophila melanogaster (Fruit fly)).